A 222-amino-acid chain; its full sequence is Collectrin (222 aa).

The signal sequence occupies residues 1 to 14; it reads MLWALFFLVTTIHA. The Extracellular segment spans residues 15 to 141; sequence ELCHPDAENA…LAPPMEPSVP (127 aa). In terms of domain architecture, Collectrin-like spans 21–222; sequence AENAFKVRLS…LTEDERLTPL (202 aa). N-linked (GlcNAc...) asparagine glycans are attached at residues N76 and N93. The chain crosses the membrane as a helical span at residues 142 to 162; sequence VWIIVFGVIFCIVTVAIALLV. At 163–222 the chain is on the cytoplasmic side; that stretch reads LSGIRQRRRNNKGPPGVEDAEDKCENIITIENGIPCDPLDMKGGHINDGFLTEDERLTPL. 2 positions are modified to phosphothreonine: T214 and T220.

This sequence belongs to the CLTRN family. In terms of assembly, monomer. Homodimer. Homodimer; dimerization prevents CLTRN cleavage by BACE2. Interacts with SNAPIN. Interacts with SLC6A18; this interaction regulates the trafficking of SLC6A18 to the cell membrane and its amino acid transporter activity. Interacts with SLC6A19; this interaction regulates the trafficking of SLC6A19 to the cell membrane and its amino acid transporter activity. Interacts with SLC6A20B. Glycosylated. Glycosylation is required for plasma membrane localization and for its cleavage by BACE2. In terms of processing, proteolytically processed in pancreatic beta cells by BACE2 leading to the generation and extracellular release of soluble CLTRN, and a corresponding cell-associated C-terminal fragment which is later cleaved by gamma-secretase. This shedding process inactivates CLTRN. Three cleavage sites have been identified for BACE2, two clustered sites after Phe-116 and Leu-118 and a more membrane proximal site at Phe-125; the preferred BACE2 cleavage site seems to be between Phe-125 and Leu-126, Phe-116 and Leu-118 act as alternative sites. In terms of tissue distribution, expressed on the apical surface of the proximal tubules in the renal cortex (at protein level). Kidney; collecting ducts and proximal tubule. Pancreas; beta cells of islets. Expressed in the cerebral cortex, hippocampus, brainstem and cerebellum.

It localises to the cell membrane. Functionally, plays an important role in amino acid transport by acting as binding partner of amino acid transporters SLC6A18 and SLC6A19, regulating their trafficking on the cell surface and their activity. May also play a role in trafficking of amino acid transporters SLC3A1 and SLC7A9 to the renal cortical cell membrane. Regulator of SNARE complex function. Stimulator of beta cell replication. This is Collectrin from Mus musculus (Mouse).